A 326-amino-acid chain; its full sequence is Porin-like protein H (326 aa).

Residues 1 to 19 (MKKTLVALAILTAAGSANA) form the signal peptide.

It belongs to the Gram-negative porin family. As to quaternary structure, oligomer.

It localises to the cell outer membrane. In terms of biological role, forms pores that allow passive diffusion of small molecules across the outer membrane. In Photobacterium profundum (strain SS9), this protein is Porin-like protein H (ompH).